We begin with the raw amino-acid sequence, 275 residues long: Diaminopimelate epimerase (275 aa).

Substrate-binding residues include asparagine 12, glutamine 45, and asparagine 65. The active-site Proton donor is the cysteine 74. Residues 75-76 (GN), asparagine 158, asparagine 191, and 209-210 (ER) each bind substrate. The Proton acceptor role is filled by cysteine 218. 219-220 (GT) is a substrate binding site.

It belongs to the diaminopimelate epimerase family. As to quaternary structure, homodimer.

It is found in the cytoplasm. It carries out the reaction (2S,6S)-2,6-diaminopimelate = meso-2,6-diaminopimelate. Its pathway is amino-acid biosynthesis; L-lysine biosynthesis via DAP pathway; DL-2,6-diaminopimelate from LL-2,6-diaminopimelate: step 1/1. Catalyzes the stereoinversion of LL-2,6-diaminopimelate (L,L-DAP) to meso-diaminopimelate (meso-DAP), a precursor of L-lysine and an essential component of the bacterial peptidoglycan. The protein is Diaminopimelate epimerase of Shewanella denitrificans (strain OS217 / ATCC BAA-1090 / DSM 15013).